The chain runs to 203 residues: Large ribosomal subunit protein uL18 (203 aa).

Belongs to the universal ribosomal protein uL18 family. In terms of assembly, part of the 50S ribosomal subunit. Contacts the 5S and 23S rRNAs.

Its function is as follows. This is one of the proteins that bind and probably mediate the attachment of the 5S RNA into the large ribosomal subunit, where it forms part of the central protuberance. In Pyrococcus furiosus (strain ATCC 43587 / DSM 3638 / JCM 8422 / Vc1), this protein is Large ribosomal subunit protein uL18.